Consider the following 538-residue polypeptide: Dolichol kinase (538 aa).

Residues 1-13 (MTRECPSPAPGPG) are Lumenal-facing. The chain crosses the membrane as a helical span at residues 14–34 (APLSGSVLAEAAVVFAVVLSI). At 35 to 74 (HATVWDRYSWCAVALAVQAFYVQYKWDRLLQQGSAVFQFR) the chain is on the cytoplasmic side. The chain crosses the membrane as a helical span at residues 75–95 (MSANSGLLPASMVMPLLGLVM). The Lumenal portion of the chain corresponds to 96-111 (KERCQTAGNPFFERFG). Residues 112 to 132 (IVVAATGMAVALFSSVLALGI) form a helical membrane-spanning segment. Residues 133-134 (TR) are Cytoplasmic-facing. The chain crosses the membrane as a helical span at residues 135-155 (PVPTNTCVILGLAGGVIIYIM). The Lumenal segment spans residues 156–163 (KHSLSVGE). The helical transmembrane segment at 164 to 184 (VIEVLEVLLIFVYLNMILLYL) threads the bilayer. Residues 185–188 (LPRC) are Cytoplasmic-facing. Residues 189 to 209 (FTPGEALLVLGGISFVLNQLI) form a helical membrane-spanning segment. Residues 210 to 224 (KRSLTLVESQGDPVD) lie on the Lumenal side of the membrane. Residues 225-245 (FFLLVVVVGMVLMGIFFSTLF) traverse the membrane as a helical segment. The Cytoplasmic segment spans residues 246–254 (VFMDSGTWA). The chain crosses the membrane as a helical span at residues 255–275 (SSIFFHLMTCVLSLGVVLPWL). Residues 276–297 (HRLIRRNPLLWLLQFLFQTDTR) are Lumenal-facing. Residues 298–318 (IYLLAYWSLLATLACLVVLYQ) traverse the membrane as a helical segment. Over 319-337 (NAKRSSSESKKHQAPTIAR) the chain is Cytoplasmic. A helical membrane pass occupies residues 338–354 (KYFHLIVVATYIPGIIF). Over 355 to 359 (DRPLL) the chain is Lumenal. Residues 360–380 (YVAATVCLAVFIFLEYVRYFR) traverse the membrane as a helical segment. Residues 381–401 (IKPLGHTLRSFLSLFLDERDS) are Cytoplasmic-facing. A helical membrane pass occupies residues 402 to 422 (GPLILTHIYLLLGMSLPIWLI). Topologically, residues 423-436 (PRPCTQKGSLGGAR) are lumenal. The helical transmembrane segment at 437-457 (ALVPYAGVLAVGVGDTVASIF) threads the bilayer. Residues 458 to 472 (GSTMGEIRWPGTKKT) are Cytoplasmic-facing. Residues 459 to 474 (STMGEIRWPGTKKTFE) form a CTP-binding region. Residues 473–493 (FEGTMTSIFAQIISVALILIF) form a helical membrane-spanning segment. Residues 494–495 (DS) lie on the Lumenal side of the membrane. The chain crosses the membrane as a helical span at residues 496 to 516 (GVDLNYSYAWILGSISTVSLL). The Cytoplasmic portion of the chain corresponds to 517–538 (EAYTTQIDNLLLPLYLLILLMA).

Belongs to the polyprenol kinase family. Ubiquitous.

The protein localises to the endoplasmic reticulum membrane. It catalyses the reaction a di-trans,poly-cis-dolichol + CTP = a di-trans,poly-cis-dolichyl phosphate + CDP + H(+). The protein operates within protein modification; protein glycosylation. In terms of biological role, catalyzes CTP-mediated phosphorylation of dolichol, the terminal step in de novo dolichyl monophosphate (Dol-P) biosynthesis. Dol-P is a lipid carrier essential for the synthesis of N-linked and O-linked oligosaccharides and for GPI anchors. This is Dolichol kinase (DOLK) from Homo sapiens (Human).